We begin with the raw amino-acid sequence, 318 residues long: Homoserine O-succinyltransferase (318 aa).

The Acyl-thioester intermediate role is filled by cysteine 142. Substrate is bound by residues lysine 163 and serine 192. The active-site Proton acceptor is histidine 235. Residue glutamate 237 is part of the active site. Arginine 249 contacts substrate.

The protein belongs to the MetA family.

It is found in the cytoplasm. The enzyme catalyses L-homoserine + succinyl-CoA = O-succinyl-L-homoserine + CoA. It functions in the pathway amino-acid biosynthesis; L-methionine biosynthesis via de novo pathway; O-succinyl-L-homoserine from L-homoserine: step 1/1. Transfers a succinyl group from succinyl-CoA to L-homoserine, forming succinyl-L-homoserine. This Shewanella putrefaciens (strain CN-32 / ATCC BAA-453) protein is Homoserine O-succinyltransferase.